The sequence spans 612 residues: UvrABC system protein C (612 aa).

The GIY-YIG domain occupies 20-98 (THSGVYRMLD…IKQHRPKYNI (79 aa)). One can recognise a UVR domain in the interval 208 to 243 (SSVLEEISAKMYQASEDMEYEKAQVYRDQLVVLRKL).

The protein belongs to the UvrC family. As to quaternary structure, interacts with UvrB in an incision complex.

It localises to the cytoplasm. Functionally, the UvrABC repair system catalyzes the recognition and processing of DNA lesions. UvrC both incises the 5' and 3' sides of the lesion. The N-terminal half is responsible for the 3' incision and the C-terminal half is responsible for the 5' incision. The protein is UvrABC system protein C of Francisella tularensis subsp. mediasiatica (strain FSC147).